The primary structure comprises 510 residues: NAD(P)H-quinone oxidoreductase subunit 2 B, chloroplastic (510 aa).

Helical transmembrane passes span 24-44, 59-79, 99-119, 124-144, 150-170, 184-204, 229-249, 295-315, 323-343, 354-374, 395-415, 418-438, and 484-504; these read LLLF…GLIL, WFYF…LFRW, IFQF…VEYI, MAIT…MFLC, ITIF…SGYT, LLMG…LYGL, ISIA…LAPF, WHLL…LIAI, MLAY…IVGD, YMLF…LFGL, ALSL…AGFF, LHLF…IGLL, and MIVC…ILAI.

It belongs to the complex I subunit 2 family. In terms of assembly, NDH is composed of at least 16 different subunits, 5 of which are encoded in the nucleus.

It is found in the plastid. Its subcellular location is the chloroplast thylakoid membrane. The enzyme catalyses a plastoquinone + NADH + (n+1) H(+)(in) = a plastoquinol + NAD(+) + n H(+)(out). It catalyses the reaction a plastoquinone + NADPH + (n+1) H(+)(in) = a plastoquinol + NADP(+) + n H(+)(out). NDH shuttles electrons from NAD(P)H:plastoquinone, via FMN and iron-sulfur (Fe-S) centers, to quinones in the photosynthetic chain and possibly in a chloroplast respiratory chain. The immediate electron acceptor for the enzyme in this species is believed to be plastoquinone. Couples the redox reaction to proton translocation, and thus conserves the redox energy in a proton gradient. This chain is NAD(P)H-quinone oxidoreductase subunit 2 B, chloroplastic, found in Acorus calamus (Sweet flag).